A 251-amino-acid polypeptide reads, in one-letter code: DNA-directed RNA polymerase III subunit RPC7 (251 aa).

Residues 186–251 (DDASTGDGAA…EEDPNEEAAF (66 aa)) are disordered. At serine 189 the chain carries Phosphoserine. Acidic residues-rich tracts occupy residues 203 to 225 (GEDD…DDDY) and 234 to 251 (GDDD…EAAF).

The protein belongs to the eukaryotic RPC7 RNA polymerase subunit family. As to quaternary structure, component of the RNA polymerase III (Pol III) complex consisting of 17 subunits.

It localises to the nucleus. In terms of biological role, DNA-dependent RNA polymerase catalyzes the transcription of DNA into RNA using the four ribonucleoside triphosphates as substrates. Specific peripheric component of RNA polymerase III which synthesizes small RNAs, such as 5S rRNA and tRNAs. C31 is involved in the formation of the initiation complex. This is DNA-directed RNA polymerase III subunit RPC7 (RPC31) from Saccharomyces cerevisiae (strain ATCC 204508 / S288c) (Baker's yeast).